The primary structure comprises 94 residues: Acylphosphatase (94 aa).

In terms of domain architecture, Acylphosphatase-like spans 7-94 (RLTARITGVV…GEFDDFRIID (88 aa)). Active-site residues include Arg22 and Asn40.

It belongs to the acylphosphatase family.

It catalyses the reaction an acyl phosphate + H2O = a carboxylate + phosphate + H(+). The polypeptide is Acylphosphatase (acyP) (Paenarthrobacter aurescens (strain TC1)).